The following is a 156-amino-acid chain: Small ribosomal subunit protein uS7 (156 aa).

It belongs to the universal ribosomal protein uS7 family. Part of the 30S ribosomal subunit. Contacts proteins S9 and S11.

In terms of biological role, one of the primary rRNA binding proteins, it binds directly to 16S rRNA where it nucleates assembly of the head domain of the 30S subunit. Is located at the subunit interface close to the decoding center, probably blocks exit of the E-site tRNA. This is Small ribosomal subunit protein uS7 from Pectobacterium carotovorum subsp. carotovorum (strain PC1).